We begin with the raw amino-acid sequence, 471 residues long: U1 small nuclear ribonucleoprotein 70 kDa (471 aa).

Positions 48-78 are disordered; sequence FEDPRDAPPPTRAETREERMERKRREKIERR. Positions 60-78 are enriched in basic and acidic residues; that stretch reads AETREERMERKRREKIERR. The segment at 92–202 is required for interaction with U1 RNA; sequence HNDQNAQGDA…GGGLGGTRRG (111 aa). The region spanning 103 to 184 is the RRM domain; sequence KTLFVARVNY…LVDVERGRTV (82 aa). The disordered stretch occupies residues 187–471; that stretch reads WRPRRLGGGL…NGYMMEPPME (285 aa). A compositionally biased stretch (gly residues) spans 192-201; the sequence is LGGGLGGTRR. A compositionally biased stretch (basic and acidic residues) spans 207–245; it reads NIRHSGRDDTSRYDERDRDRERERDRRERSRERDKERER. A compositionally biased stretch (basic residues) spans 246–259; sequence RRSRSRERRRRSRS. A compositionally biased stretch (basic and acidic residues) spans 260–293; sequence REKEERKRSRERSRDKDKDKDKDKDKEKDKDKDR. Basic residues predominate over residues 294-303; that stretch reads DRKRRSRSRE. Composition is skewed to basic and acidic residues over residues 304–321 and 344–428; these read RKRE…RVEG and IELK…ERVP.

Component of the U1 snRNP. The U1 snRNP is composed of the U1 snRNA and the 7 core Sm proteins snrpb, snrpd1, snrpd2, snrpd3, snrpe, snrpf and snrpg that assemble in a heptameric protein ring on the Sm site of the small nuclear RNA to form the core snRNP, and at least three U1 snRNP-specific proteins snrnp70/U1-70K, snrpa/U1-A and snrpc/U1-C.

Its subcellular location is the nucleus speckle. It localises to the nucleus. It is found in the nucleoplasm. Component of the spliceosomal U1 snRNP, which is essential for recognition of the pre-mRNA 5' splice-site and the subsequent assembly of the spliceosome. snrnp70 binds to the loop I region of U1-snRNA. This is U1 small nuclear ribonucleoprotein 70 kDa (snrnp70) from Xenopus tropicalis (Western clawed frog).